The chain runs to 744 residues: Serine/threonine-protein kinase GM11705 (744 aa).

Residues 17–35 are compositionally biased toward polar residues; the sequence is VLSSHQPSPSATHPQSVPS. Disordered regions lie at residues 17–38 and 54–78; these read VLSSHQPSPSATHPQSVPSKAN and NVQEDNSYNRDCDSPVSSSSEPEKE. Doublecortin domains are found at residues 154-240 and 309-392; these read LRIK…VEYN and RIVT…AEDF. In terms of domain architecture, Protein kinase spans 473-731; sequence YTLGRIIGDG…SEDILDHPWT (259 aa). ATP is bound by residues 479-487 and Lys-502; that span reads IGDGNFAIV. The active-site Proton acceptor is Asp-594.

It belongs to the protein kinase superfamily. CAMK Ser/Thr protein kinase family. CaMK subfamily.

The catalysed reaction is L-seryl-[protein] + ATP = O-phospho-L-seryl-[protein] + ADP + H(+). The enzyme catalyses L-threonyl-[protein] + ATP = O-phospho-L-threonyl-[protein] + ADP + H(+). The protein is Serine/threonine-protein kinase GM11705 of Drosophila sechellia (Fruit fly).